Here is a 160-residue protein sequence, read N- to C-terminus: 3-dehydroquinate dehydratase (160 aa).

The active-site Proton acceptor is the Tyr-22. Asn-73, His-79, and Asp-86 together coordinate substrate. His-99 acts as the Proton donor in catalysis. Residues 100 to 101 (IS) and Arg-110 contribute to the substrate site.

It belongs to the type-II 3-dehydroquinase family. As to quaternary structure, homododecamer.

The catalysed reaction is 3-dehydroquinate = 3-dehydroshikimate + H2O. The protein operates within metabolic intermediate biosynthesis; chorismate biosynthesis; chorismate from D-erythrose 4-phosphate and phosphoenolpyruvate: step 3/7. Its function is as follows. Catalyzes a trans-dehydration via an enolate intermediate. This chain is 3-dehydroquinate dehydratase, found in Campylobacter lari (strain RM2100 / D67 / ATCC BAA-1060).